We begin with the raw amino-acid sequence, 295 residues long: UDP-N-acetylenolpyruvoylglucosamine reductase (295 aa).

The FAD-binding PCMH-type domain occupies 26 to 189 (VGGQADILFK…IEAEFKGVSS (164 aa)). Residue arginine 169 is part of the active site. Catalysis depends on cysteine 218, which acts as the Proton donor. Glutamate 288 is a catalytic residue.

It belongs to the MurB family. Requires FAD as cofactor.

Its subcellular location is the cytoplasm. The enzyme catalyses UDP-N-acetyl-alpha-D-muramate + NADP(+) = UDP-N-acetyl-3-O-(1-carboxyvinyl)-alpha-D-glucosamine + NADPH + H(+). It participates in cell wall biogenesis; peptidoglycan biosynthesis. Its function is as follows. Cell wall formation. The sequence is that of UDP-N-acetylenolpyruvoylglucosamine reductase from Wolbachia sp. subsp. Brugia malayi (strain TRS).